Here is a 177-residue protein sequence, read N- to C-terminus: Glia associated membrane protein glam-1 (177 aa).

3 consecutive transmembrane segments (helical) span residues P19–S39, F42–A62, and V76–A96.

The protein localises to the membrane. In Caenorhabditis elegans, this protein is Glia associated membrane protein glam-1.